We begin with the raw amino-acid sequence, 179 residues long: Large ribosomal subunit protein uL6 (179 aa).

This sequence belongs to the universal ribosomal protein uL6 family. Part of the 50S ribosomal subunit.

Its function is as follows. This protein binds to the 23S rRNA, and is important in its secondary structure. It is located near the subunit interface in the base of the L7/L12 stalk, and near the tRNA binding site of the peptidyltransferase center. This Mycobacterium avium (strain 104) protein is Large ribosomal subunit protein uL6.